Consider the following 474-residue polypeptide: Eukaryotic translation initiation factor 3 subunit L (474 aa).

A PCI domain is found at 255 to 449; sequence DAIRMFSHIL…DLDYALQGDL (195 aa).

It belongs to the eIF-3 subunit L family. In terms of assembly, component of the eukaryotic translation initiation factor 3 (eIF-3) complex.

Its subcellular location is the cytoplasm. Component of the eukaryotic translation initiation factor 3 (eIF-3) complex, which is involved in protein synthesis of a specialized repertoire of mRNAs and, together with other initiation factors, stimulates binding of mRNA and methionyl-tRNAi to the 40S ribosome. The eIF-3 complex specifically targets and initiates translation of a subset of mRNAs involved in cell proliferation. The sequence is that of Eukaryotic translation initiation factor 3 subunit L from Chaetomium globosum (strain ATCC 6205 / CBS 148.51 / DSM 1962 / NBRC 6347 / NRRL 1970) (Soil fungus).